Consider the following 77-residue polypeptide: Beta-defensin 135 (77 aa).

An N-terminal signal peptide occupies residues 1–24; that stretch reads MATRSVLLALVVLNLLFYVPPGRS. 3 disulfides stabilise this stretch: Cys-37-Cys-64, Cys-44-Cys-58, and Cys-48-Cys-65.

It belongs to the beta-defensin family.

It localises to the secreted. Functionally, has antibacterial activity. The chain is Beta-defensin 135 (DEFB135) from Homo sapiens (Human).